Consider the following 105-residue polypeptide: Large ribosomal subunit protein bL21 (105 aa).

It belongs to the bacterial ribosomal protein bL21 family. Part of the 50S ribosomal subunit. Contacts protein L20.

Its function is as follows. This protein binds to 23S rRNA in the presence of protein L20. In Stenotrophomonas maltophilia (strain R551-3), this protein is Large ribosomal subunit protein bL21.